A 451-amino-acid chain; its full sequence is Tetraspanin-14 (451 aa).

Topologically, residues 1–56 are cytoplasmic; it reads MPHRAPRRFMKTAPGACDWEQCLLMGSGEPTRARAVVSSSHKQRKPRQEISACLKW. The Basolateral membrane targeting signature appears at 20 to 24; it reads EQCLL. A helical transmembrane segment spans residues 57 to 77; that stretch reads LVFLLNSIVFLVGVGILALGV. Residues 78-96 are Extracellular-facing; that stretch reads YLFIKDFREVKLVDIILNP. Residues 97 to 117 traverse the membrane as a helical segment; it reads AILISIFGFSICVVSFFGFMG. At 118 to 130 the chain is on the cytoplasmic side; it reads ALRDNIFLLKCFA. A helical transmembrane segment spans residues 131-151; sequence ACVFLSYILVVAVTLVFFTLF. Residues 152–285 are Extracellular-facing; the sequence is YTDTTEGLSA…QPLRTLFESH (134 aa). Residues N205 and N211 are each glycosylated (N-linked (GlcNAc...) asparagine). Residues 286–306 traverse the membrane as a helical segment; sequence AVHVGAFVALLIVPVCISVCL. At 307 to 451 the chain is on the cytoplasmic side; sequence TNILAKQVDH…TDLVPQKSKS (145 aa). Positions 328-451 are disordered; it reads NDRRRKRDHN…TDLVPQKSKS (124 aa). Residues 366–376 are compositionally biased toward pro residues; it reads PDIPPPLPPIE. The segment covering 410–434 has biased composition (low complexity); the sequence is ATTTRTPPAAAGPAPTPQATTTNRT. The segment covering 435 to 444 has biased composition (polar residues); that stretch reads HQWVLQQTDL.

Belongs to the tetraspanin (TM4SF) family. In terms of tissue distribution, expressed in the germline, particularly in sperm cells. As to expression, expressed in the germline (particularly in sperm cells), anterior sensory cilia, hypodermis and vulva (at protein level). Expressed in the pharynx, hypodermis and vulva (at protein level).

The protein resides in the cell membrane. Its subcellular location is the cytoplasmic vesicle membrane. The protein localises to the endosome membrane. It localises to the early endosome membrane. It is found in the late endosome membrane. The protein resides in the recycling endosome membrane. Its subcellular location is the apical cell membrane. The protein localises to the basolateral cell membrane. In terms of biological role, functions redundantly with tsp-12 to regulate cell surface levels of the BMP type II receptor daf-4 (but not BMP type I receptor sma-6), probably by regulating endosomal sorting and recycling of receptors, preventing their targeting to degradative lysosomes. Together with tsp-12, regulates cell fate specification in the postembryonic mesodermal M lineage, body size, male development and vulva development, probably by positively modulating BMP-like Sma/Mab signaling. Together with tsp-12 involved in maintaining the structural and functional integrity of the endosomal network. Together with tsp-12, probably acts by modulating the activation of glp-1, Notch-like receptor, to regulate germline maturation. Functions redundantly with tsp-12 to regulate cell fate specification in the postembryonic mesodermal M lineage, body size, embryonic and vulva development. Its function is as follows. Functions redundantly with tsp-12 to regulate cell fate specification in the postembryonic mesodermal M lineage. Likely plays a complementary role in mesodermal development with tsp-14 isoform a, but may be more critical. This chain is Tetraspanin-14, found in Caenorhabditis elegans.